The chain runs to 882 residues: MGPWSRSLSALLLLLQVSSWLCQEPEPCHPGFDAESYTFTVPRRHLERGRVLGRVNFEDCTGRQRTAYFSLDTRFKVGTDGVITVKRPLRFHNPQIHFLVYAWDSTYRKFSTKVTLNTVGHHHRPLPHQASVSGIQAELLTFPNSSSGLRRRKRDWVIPPISCPENEKGPFPKNLVQIKSNKDKEGKVFYSITGQGADTPPVGVFIIERETGWLKVTEPLDRERIATYTLFSHAVSSNGNAVEDPMEILITVTDQNDNKPEFTQEVFKGSVMEGALPGTSVMEVTATDADDDVNTYNAAIAYTILSQDPELPDKNMFTINRNTGVISVVTTGLDRESFPTYTLVVQAADLQGEGLSTTATAVITVTDTNDNPPVFNPTTYKGQVPEDEANVVITTLKVTDADAPSTPAWEAVYTILNDNGGQFVVTTNPVNNDGILKTAKGLDFEAKQQYILHVAVTNVVPFEVSLTTSTATVTVDVLDVNEAPIFVPPEKRVEVSEDFGVGQEITSYTAWEPDTFMEQKITYRIWRDTANWLEINPDTGAISTRAELDREDVEHVKNSTYTALIIATDNGSPVATGTGTLLLILSDVNDNAPIPEPRTLFFCERNPKPQVINIIDADLPPNTSPFTAELTHGASANWTIQYNDPTQESIILKPKMALEVGDYKINLKLMDNQNKDQVTTLEVGVCDCEGVAGVCKKAQPIEAGLQIPAILGILGGILALLILILLLLLFLRRRAVVKEPLLPPEDDTRDNVYYYDEEGGGEEDQDFDLSQLHRGLDARPEVTRNDVAPTLMSVPRYLPRPANPVEIGNFIDENLKAADTDPTAPPYDSLLVFDYEGSGSEAASLSSLNSSESDKDQDYDYLNEWGNRFKKLADMYGGGEDD.

A signal peptide spans 1 to 22; it reads MGPWSRSLSALLLLLQVSSWLC. Residues 23 to 154 constitute a propeptide that is removed on maturation; it reads QEPEPCHPGF…SSSGLRRRKR (132 aa). Asn144 carries N-linked (GlcNAc...) asparagine glycosylation. Cadherin domains are found at residues 155–262, 263–375, 376–486, 487–593, and 594–697; these read DWVI…KPEF, TQEV…PPVF, NPTT…APIF, VPPE…DNAP, and IPEP…VCKK. Over 155-709 the chain is Extracellular; sequence DWVIPPISCP…PIEAGLQIPA (555 aa). Asp257 serves as a coordination point for Ca(2+). The O-linked (Man...) serine glycan is linked to Ser280. A glycan (O-linked (Man...) threonine) is linked at Thr285. Asp288 serves as a coordination point for Ca(2+). O-linked (Man...) threonine glycosylation is found at Thr358, Thr470, Thr472, and Thr509. A glycan (N-linked (GlcNAc...) asparagine) is linked at Asn558. Residues Thr576, Thr578, and Thr580 are each glycosylated (O-linked (Man...) threonine). Asn637 carries N-linked (GlcNAc...) asparagine glycosylation. A helical transmembrane segment spans residues 710–730; the sequence is ILGILGGILALLILILLLLLF. Over 731–882 the chain is Cytoplasmic; the sequence is LRRRAVVKEP…ADMYGGGEDD (152 aa). Residues 747 to 767 form a disordered region; it reads DTRDNVYYYDEEGGGEEDQDF. Residues Tyr753, Tyr754, and Tyr755 each carry the phosphotyrosine; by SRC modification. Residues 755–767 are compositionally biased toward acidic residues; that stretch reads YDEEGGGEEDQDF. The segment at 758–769 is required for binding CTNND1 and PSEN1; that stretch reads EGGGEEDQDFDL. Phosphoserine is present on residues Ser770, Ser793, Ser838, Ser840, and Ser846. The required for binding alpha, beta and gamma catenins stretch occupies residues 811–882; that stretch reads IDENLKAADT…ADMYGGGEDD (72 aa).

In terms of assembly, homodimer; disulfide-linked. Component of an E-cadherin/ catenin adhesion complex composed of at least E-cadherin/CDH1, beta-catenin/CTNNB1 or gamma-catenin/JUP, and potentially alpha-catenin/CTNNA1; the complex is located to adherens junctions. Found in a complex composed of CDH1, RAP1A and PKP3; PKP3 acts as a scaffold protein within the complex, the complex is required for CDH1 localization to mature desmosome cell junctions. Interacts with the TRPV4 and CTNNB1 complex. Interacts with CTNND1. The stable association of CTNNA1 is controversial as CTNNA1 was shown not to bind to F-actin when assembled in the complex. Alternatively, the CTNNA1-containing complex may be linked to F-actin by other proteins such as LIMA1. Interaction with PSEN1, cleaves CDH1 resulting in the disassociation of cadherin-based adherens junctions (CAJs). Interacts with AJAP1 and DLGAP5. Interacts with TBC1D2. Interacts with LIMA1. Interacts with CAV1. Interacts with PIP5K1C. Interacts with RAB8B. Interacts with DDR1; this stabilizes CDH1 at the cell surface and inhibits its internalization. Interacts with RAPGEF2. Interacts with KLRG1. Forms a ternary complex composed of ADAM10, CADH1 and EPHA4; within the complex, CADH1 is cleaved by ADAM10 which disrupts adherens junctions. Interacts with SPEF1. Interacts with CTNNB1 and PKP2. Interacts with AMOTL2; the interaction may facilitate binding of radial actin fibers to cell junction complexes. Interacts with DSG3; the interaction is required for CDH1 localization to developing adherens junctions. In terms of processing, during apoptosis or with calcium influx, cleaved by a membrane-bound metalloproteinase (ADAM10), PS1/gamma-secretase and caspase-3. Processing by the metalloproteinase, induced by calcium influx, causes disruption of cell-cell adhesion and the subsequent release of beta-catenin into the cytoplasm. The residual membrane-tethered cleavage product is rapidly degraded via an intracellular proteolytic pathway. Cleavage by caspase-3 releases the cytoplasmic tail resulting in disintegration of the actin microfilament system. The gamma-secretase-mediated cleavage promotes disassembly of adherens junctions. During development of the cochlear organ of Corti, cleavage by ADAM10 at adherens junctions promotes pillar cell separation. N-glycosylation at Asn-637 is essential for expression, folding and trafficking. Addition of bisecting N-acetylglucosamine by MGAT3 modulates its cell membrane location. Post-translationally, ubiquitinated by a SCF complex containing SKP2, which requires prior phosphorylation by CK1/CSNK1A1. Ubiquitinated by CBLL1/HAKAI, requires prior phosphorylation at Tyr-754. In terms of processing, O-glycosylated. O-manosylated by TMTC1, TMTC2, TMTC3 or TMTC4. Thr-285 and Thr-509 are O-mannosylated by TMTC2 or TMTC4 but not TMTC1 or TMTC3.

It localises to the cell junction. The protein localises to the adherens junction. The protein resides in the cell membrane. It is found in the endosome. Its subcellular location is the golgi apparatus. It localises to the trans-Golgi network. The protein localises to the cytoplasm. The protein resides in the desmosome. Cadherins are calcium-dependent cell adhesion proteins. They preferentially interact with themselves in a homophilic manner in connecting cells; cadherins may thus contribute to the sorting of heterogeneous cell types. CDH1 is involved in mechanisms regulating cell-cell adhesions, mobility and proliferation of epithelial cells. Promotes organization of radial actin fiber structure and cellular response to contractile forces, via its interaction with AMOTL2 which facilitates anchoring of radial actin fibers to CDH1 junction complexes at the cell membrane. Plays a role in the early stages of desmosome cell-cell junction formation via facilitating the recruitment of DSG2 and DSP to desmosome plaques. Has a potent invasive suppressor role. It is a ligand for integrin alpha-E/beta-7. In terms of biological role, E-Cad/CTF2 promotes non-amyloidogenic degradation of Abeta precursors. Has a strong inhibitory effect on APP C99 and C83 production. This Pongo abelii (Sumatran orangutan) protein is Cadherin-1 (CDH1).